We begin with the raw amino-acid sequence, 121 residues long: UPF0738 protein BPUM_1088 (121 aa).

It belongs to the UPF0738 family.

The sequence is that of UPF0738 protein BPUM_1088 from Bacillus pumilus (strain SAFR-032).